Consider the following 61-residue polypeptide: uncharacterized protein (61 aa).

2 helical membrane-spanning segments follow: residues 5-25 and 29-49; these read MLYF…SLLL and YILT…PWYT.

The protein resides in the membrane. This is an uncharacterized protein from Saccharomyces cerevisiae (strain ATCC 204508 / S288c) (Baker's yeast).